Reading from the N-terminus, the 168-residue chain is Photosystem I assembly protein Ycf3 (168 aa).

TPR repeat units lie at residues 35-68, 72-105, and 120-153; these read AFAYYINGMSAQSEGNYAEALQNYYQAMHLEMDP, SYILYNIGIIHTSNGEHSKALEYYCRAIERNPFL, and GEQAIQQGDSEIAEAWFDQAAEYWKQARTLTPDN.

It belongs to the Ycf3 family.

Its subcellular location is the plastid membrane. In terms of biological role, essential for the assembly of the photosystem I (PSI) complex. May act as a chaperone-like factor to guide the assembly of the PSI subunits. The chain is Photosystem I assembly protein Ycf3 from Cuscuta obtusiflora (Peruvian dodder).